Consider the following 205-residue polypeptide: Arginine exporter protein ArgO (205 aa).

Helical transmembrane passes span 1 to 21 (MLAV…PLGP), 42 to 62 (LCAL…SALL), 67 to 87 (LLLA…GWGA), 111 to 131 (ILVT…DTFV), 147 to 167 (WFAL…AFLA), and 185 to 205 (LFVG…GFGL).

It belongs to the LysE/ArgO transporter (TC 2.A.75) family.

The protein resides in the cell inner membrane. It carries out the reaction L-arginine(in) = L-arginine(out). Functionally, involved in the export of arginine. Important to control the intracellular level of arginine and the correct balance between arginine and lysine. The chain is Arginine exporter protein ArgO from Yersinia pseudotuberculosis serotype O:3 (strain YPIII).